Consider the following 1206-residue polypeptide: DNA-directed RNA polymerase subunit beta' (1206 aa).

Zn(2+) is bound by residues Cys60, Cys62, Cys75, and Cys78. Mg(2+) contacts are provided by Asp449, Asp451, and Asp453. Residues Cys818, Cys892, Cys899, and Cys902 each coordinate Zn(2+).

This sequence belongs to the RNA polymerase beta' chain family. The RNAP catalytic core consists of 2 alpha, 1 beta, 1 beta' and 1 omega subunit. When a sigma factor is associated with the core the holoenzyme is formed, which can initiate transcription. Mg(2+) is required as a cofactor. Zn(2+) serves as cofactor.

The enzyme catalyses RNA(n) + a ribonucleoside 5'-triphosphate = RNA(n+1) + diphosphate. DNA-dependent RNA polymerase catalyzes the transcription of DNA into RNA using the four ribonucleoside triphosphates as substrates. This Halalkalibacterium halodurans (strain ATCC BAA-125 / DSM 18197 / FERM 7344 / JCM 9153 / C-125) (Bacillus halodurans) protein is DNA-directed RNA polymerase subunit beta'.